The sequence spans 90 residues: Acylphosphatase (90 aa).

Residues 3-90 enclose the Acylphosphatase-like domain; that stretch reads NYKIIVFGTV…KTYNDFSVTY (88 aa). Catalysis depends on residues Arg-18 and Asn-36.

This sequence belongs to the acylphosphatase family.

It catalyses the reaction an acyl phosphate + H2O = a carboxylate + phosphate + H(+). The chain is Acylphosphatase (acyP) from Ligilactobacillus salivarius (strain UCC118) (Lactobacillus salivarius).